The chain runs to 582 residues: MLLALLRQHIRPYRRLVAMLMMLQLVSTLASLYLPTVNAEIVDDGVAKGDTATIVRLGAVMLGVTGLQVLCAIGAVYLGSRTGAGFGRDLRSAMFEHIITFSERETARFGAPTLLTRSTNDVRQILFLVQMTATVLVTAPIMCVGGIIMAIHQEAALTWLLLVSVPILAVANYWIISHMLPLFRRMQSLIDGINRVMRDQLSGVRVVRAFTREGYERDKFAQANTALSNAALSAGNWQALMLPVTTLTINASSVALIWFGGLRIDSGQMQVGSLIAFLSYFAQILMAVLMATMTLAVLPRASVCAERITEVLSTPAALGNPDNPKFPTDGVTGVVRLAGATFTYPGADCPVLQDISLTARPGTTTAIVGSTGSGKSTLVSLICRLYDVTAGAVLVDGIDVREYHTERLWSAIGLVPQRSYLFSGTVADNLRYGGGPDQVVTEQEMWEALRVAAADGFVQTDGLQTRVAQGGVNFSGGQRQRLAIARAVIRRPAIYVFDDAFSALDVHTDAKVHASLRQVSGDATIIVVTQRISNAAQADQVIVVDNGKIVGTGTHETLLADCPTYAEFAASQSLSATVGGVG.

The next 6 helical transmembrane spans lie at 17 to 37 (VAMLMMLQLVSTLASLYLPTV), 57 to 77 (LGAVMLGVTGLQVLCAIGAVY), 131 to 151 (MTATVLVTAPIMCVGGIIMAI), 156 to 176 (ALTWLLLVSVPILAVANYWII), 239 to 259 (ALMLPVTTLTINASSVALIWF), and 271 to 291 (VGSLIAFLSYFAQILMAVLMA). The ABC transmembrane type-1 domain maps to 17-300 (VAMLMMLQLV…ATMTLAVLPR (284 aa)). Residues 335-571 (VRLAGATFTY…CPTYAEFAAS (237 aa)) form the ABC transporter domain. ATP is bound at residue 369 to 376 (GSTGSGKS).

It belongs to the ABC transporter superfamily.

The protein resides in the cell membrane. This is an uncharacterized protein from Mycobacterium tuberculosis (strain CDC 1551 / Oshkosh).